The following is a 393-amino-acid chain: Messenger RNA-binding inhibitor of apoptosis 1 (393 aa).

The tract at residues 12–76 is KH 1-like; the sequence is ELYIPQKMKA…EKILRDVWRK (65 aa). The segment at 79-157 is KH 2-like; the sequence is VQIMIREAAL…MMIECLTEHF (79 aa). Residues 259–322 form a KH 3-like region; the sequence is EKIKQWIPTT…NKEQCQEARN (64 aa). The segment at 328–393 is disordered; the sequence is MQSHQDKPAS…LTPRKLSPSD (66 aa). Over residues 345–359 the composition is skewed to low complexity; sequence STPGSPFTSDSSSTT.

As to quaternary structure, may interact with wago-4. In terms of tissue distribution, expressed throughout the germline and in oocytes (at protein level).

It is found in the cytoplasm. It localises to the perinuclear region. Functionally, RNA-binding protein which binds to its own mRNA and target mRNAs to negatively regulate gene expression to modulate apoptosis and differentiation in the germline. Negatively regulates the expression of the argonaute protein wago-4, and may thus play a role in RNA-mediated gene silencing (RNAi) in the germline. The polypeptide is Messenger RNA-binding inhibitor of apoptosis 1 (Caenorhabditis elegans).